The primary structure comprises 463 residues: L-seryl-tRNA(Sec) selenium transferase (463 aa).

K295 bears the N6-(pyridoxal phosphate)lysine mark.

It belongs to the SelA family. Homodecamer; pentamer of dimers. Binds only one seryl-tRNA(Sec) per dimer. The cofactor is pyridoxal 5'-phosphate.

It localises to the cytoplasm. The enzyme catalyses L-seryl-tRNA(Sec) + selenophosphate + H(+) = L-selenocysteinyl-tRNA(Sec) + phosphate. It participates in aminoacyl-tRNA biosynthesis; selenocysteinyl-tRNA(Sec) biosynthesis; selenocysteinyl-tRNA(Sec) from L-seryl-tRNA(Sec) (bacterial route): step 1/1. In terms of biological role, converts seryl-tRNA(Sec) to selenocysteinyl-tRNA(Sec) required for selenoprotein biosynthesis. The polypeptide is L-seryl-tRNA(Sec) selenium transferase (Escherichia coli (strain 55989 / EAEC)).